We begin with the raw amino-acid sequence, 264 residues long: uncharacterized protein (264 aa).

This is an uncharacterized protein from Bacillus subtilis (strain 168).